A 107-amino-acid chain; its full sequence is Nucleoid-associated protein Xfasm12_1216 (107 aa).

This sequence belongs to the YbaB/EbfC family. In terms of assembly, homodimer.

It localises to the cytoplasm. It is found in the nucleoid. Functionally, binds to DNA and alters its conformation. May be involved in regulation of gene expression, nucleoid organization and DNA protection. The sequence is that of Nucleoid-associated protein Xfasm12_1216 from Xylella fastidiosa (strain M12).